The chain runs to 503 residues: Glutamate--tRNA ligase (503 aa).

Positions 14-24 (PSPTGSLHIGG) match the 'HIGH' region motif. The 'KMSKS' region signature appears at 261–265 (KLSKR). ATP is bound at residue Lys264.

The protein belongs to the class-I aminoacyl-tRNA synthetase family. Glutamate--tRNA ligase type 1 subfamily. Monomer.

It is found in the cytoplasm. The enzyme catalyses tRNA(Glu) + L-glutamate + ATP = L-glutamyl-tRNA(Glu) + AMP + diphosphate. Functionally, catalyzes the attachment of glutamate to tRNA(Glu) in a two-step reaction: glutamate is first activated by ATP to form Glu-AMP and then transferred to the acceptor end of tRNA(Glu). This Chloroflexus aurantiacus (strain ATCC 29366 / DSM 635 / J-10-fl) protein is Glutamate--tRNA ligase.